The following is a 447-amino-acid chain: Adenylosuccinate synthetase (447 aa).

Residues 35-41 (GDEGKGK) and 63-65 (GHT) contribute to the GTP site. Catalysis depends on Asp-36, which acts as the Proton acceptor. Positions 36 and 63 each coordinate Mg(2+). IMP is bound by residues 36-39 (DEGK), 61-64 (NAGH), Thr-153, Arg-167, Asn-245, Thr-260, and Arg-324. Residue His-64 is the Proton donor of the active site. 320–326 (VTTKRKR) contacts substrate. GTP-binding positions include Arg-326, 352 to 354 (KLD), and 435 to 437 (GVG).

It belongs to the adenylosuccinate synthetase family. In terms of assembly, homodimer. The cofactor is Mg(2+).

It is found in the cytoplasm. The enzyme catalyses IMP + L-aspartate + GTP = N(6)-(1,2-dicarboxyethyl)-AMP + GDP + phosphate + 2 H(+). It functions in the pathway purine metabolism; AMP biosynthesis via de novo pathway; AMP from IMP: step 1/2. Functionally, plays an important role in the de novo pathway and in the salvage pathway of purine nucleotide biosynthesis. Catalyzes the first committed step in the biosynthesis of AMP from IMP. The chain is Adenylosuccinate synthetase from Drosophila erecta (Fruit fly).